The sequence spans 523 residues: Cyclic di-GMP binding protein BcsE (523 aa).

This sequence belongs to the BcsE family.

Its function is as follows. Required for cellulose biosynthesis. May have protease activity, but BcsA is not targeted. Binds bis-(3'-5') cyclic diguanylic acid (c-di-GMP). This chain is Cyclic di-GMP binding protein BcsE, found in Salmonella typhimurium (strain LT2 / SGSC1412 / ATCC 700720).